We begin with the raw amino-acid sequence, 1058 residues long: Bromodomain-containing protein 1 (1058 aa).

The segment covering 1–12 (MRRKGRCHRGSA) has biased composition (basic residues). The disordered stretch occupies residues 1–25 (MRRKGRCHRGSAARHPSSPCSIKHS). The interval 31–80 (LTYAQAQRMVEIEIEGRLHRISIFDPLEIILEDDLTAQEMSECNSNKENS) is interaction with KAT7/HBO1 and histones. Position 128 is a phosphoserine (S128). The PHD-type 1 zinc finger occupies 214–264 (DAVCCICMDGECQNSNVILFCDMCNLAVHQECYGVPYIPEGQWLCRHCLQS). The C2HC pre-PHD-type zinc finger occupies 268 to 301 (PADCVLCPNKGGAFKKTDDDRWGHVVCALWIPEV). A PHD-type 2 zinc finger spans residues 325–389 (LTCYLCKQKG…RKTAYCDVHT (65 aa)). 3 positions are modified to N6-acetyllysine: K368, K516, and K519. Residues K554 and K594 each participate in a glycyl lysine isopeptide (Lys-Gly) (interchain with G-Cter in SUMO2) cross-link. A Bromo domain is found at 562 to 666 (LRLTPLTVLL…DQGGVVLRQA (105 aa)). The span at 754-763 (KLSQQHSQAP) shows a compositional bias: polar residues. 2 disordered regions span residues 754–776 (KLSQQHSQAPPTGAGTGGFEDEA) and 791–847 (LETL…AAPR). Residue S803 is modified to Phosphoserine. Position 903 is an N6-acetyllysine (K903). Residues 929 to 1012 (PLKVVWAKCS…KSKMVPLGVD (84 aa)) form the PWWP domain. A phosphoserine mark is found at S1052 and S1055.

As to quaternary structure, component of some HBO1 complexes composed of KAT7/HBO1, MEAF6, ING4 and BRD1/BRPF2. Component of the MOZ/MORF complex composed at least of ING5, KAT6A, KAT6B, MEAF6 and one of BRPF1, BRD1/BRPF2 and BRPF3. Interacts (via PHD-type zinc finger domain) with unmodified histone H3. Interacts (via PWWP domain) with dimethylated and trimethylated 'Lys-79' on histone H3.

The protein localises to the nucleus. The protein resides in the chromosome. In terms of biological role, scaffold subunit of various histone acetyltransferase (HAT) complexes, such as the MOZ/MORF and HBO1 complexes, that acts as a regulator of hematopoiesis. Plays a key role in HBO1 complex by directing KAT7/HBO1 specificity towards histone H3 'Lys-14' acetylation (H3K14ac), thereby promoting erythroid differentiation. The chain is Bromodomain-containing protein 1 from Mus musculus (Mouse).